Here is a 318-residue protein sequence, read N- to C-terminus: tRNA U34 carboxymethyltransferase (318 aa).

Carboxy-S-adenosyl-L-methionine contacts are provided by residues Lys-88, Trp-102, Lys-107, Gly-126, 176–177 (LE), Met-192, Tyr-196, and Arg-311.

This sequence belongs to the class I-like SAM-binding methyltransferase superfamily. CmoB family. As to quaternary structure, homotetramer.

It carries out the reaction carboxy-S-adenosyl-L-methionine + 5-hydroxyuridine(34) in tRNA = 5-carboxymethoxyuridine(34) in tRNA + S-adenosyl-L-homocysteine + H(+). In terms of biological role, catalyzes carboxymethyl transfer from carboxy-S-adenosyl-L-methionine (Cx-SAM) to 5-hydroxyuridine (ho5U) to form 5-carboxymethoxyuridine (cmo5U) at position 34 in tRNAs. In Pseudomonas putida (strain GB-1), this protein is tRNA U34 carboxymethyltransferase.